Reading from the N-terminus, the 259-residue chain is Glucosamine-6-phosphate deaminase (259 aa).

Asp66 serves as the catalytic Proton acceptor; for enolization step. The active-site For ring-opening step is Asp135. The active-site Proton acceptor; for ring-opening step is His137. The active-site For ring-opening step is Glu142.

It belongs to the glucosamine/galactosamine-6-phosphate isomerase family. NagB subfamily.

The enzyme catalyses alpha-D-glucosamine 6-phosphate + H2O = beta-D-fructose 6-phosphate + NH4(+). The protein operates within amino-sugar metabolism; N-acetylneuraminate degradation; D-fructose 6-phosphate from N-acetylneuraminate: step 5/5. Catalyzes the reversible isomerization-deamination of glucosamine 6-phosphate (GlcN6P) to form fructose 6-phosphate (Fru6P) and ammonium ion. The chain is Glucosamine-6-phosphate deaminase from Rhodococcus jostii (strain RHA1).